We begin with the raw amino-acid sequence, 245 residues long: tRNA pseudouridine synthase A (245 aa).

Catalysis depends on D52, which acts as the Nucleophile. Residue Y111 coordinates substrate.

This sequence belongs to the tRNA pseudouridine synthase TruA family. Homodimer.

It carries out the reaction uridine(38/39/40) in tRNA = pseudouridine(38/39/40) in tRNA. Its function is as follows. Formation of pseudouridine at positions 38, 39 and 40 in the anticodon stem and loop of transfer RNAs. This Wolbachia pipientis wMel protein is tRNA pseudouridine synthase A.